The primary structure comprises 586 residues: Arginine--tRNA ligase (586 aa).

A 'HIGH' region motif is present at residues 130–140 (ANPTGPMHVGH).

The protein belongs to the class-I aminoacyl-tRNA synthetase family. In terms of assembly, monomer.

The protein resides in the cytoplasm. The catalysed reaction is tRNA(Arg) + L-arginine + ATP = L-arginyl-tRNA(Arg) + AMP + diphosphate. This chain is Arginine--tRNA ligase, found in Methylobacterium sp. (strain 4-46).